Reading from the N-terminus, the 57-residue chain is Large ribosomal subunit protein bL32 (57 aa).

This sequence belongs to the bacterial ribosomal protein bL32 family.

This Staphylococcus epidermidis (strain ATCC 35984 / DSM 28319 / BCRC 17069 / CCUG 31568 / BM 3577 / RP62A) protein is Large ribosomal subunit protein bL32.